Here is a 442-residue protein sequence, read N- to C-terminus: tRNA modification GTPase MnmE (442 aa).

Arg-24, Glu-82, and Lys-120 together coordinate (6S)-5-formyl-5,6,7,8-tetrahydrofolate. The region spanning 217–367 (GLHIVITGEP…LVSVIKEKVE (151 aa)) is the TrmE-type G domain. GTP is bound by residues 227–232 (NVGKST), 246–252 (SEYVGTT), and 271–274 (DTAG). Mg(2+) contacts are provided by Ser-231 and Thr-252. (6S)-5-formyl-5,6,7,8-tetrahydrofolate is bound at residue Lys-442.

It belongs to the TRAFAC class TrmE-Era-EngA-EngB-Septin-like GTPase superfamily. TrmE GTPase family. In terms of assembly, homodimer. Heterotetramer of two MnmE and two MnmG subunits. It depends on K(+) as a cofactor.

The protein localises to the cytoplasm. Its function is as follows. Exhibits a very high intrinsic GTPase hydrolysis rate. Involved in the addition of a carboxymethylaminomethyl (cmnm) group at the wobble position (U34) of certain tRNAs, forming tRNA-cmnm(5)s(2)U34. The protein is tRNA modification GTPase MnmE of Wolbachia sp. subsp. Brugia malayi (strain TRS).